A 445-amino-acid polypeptide reads, in one-letter code: 3-phosphoshikimate 1-carboxyvinyltransferase (445 aa).

The segment covering 1 to 20 (MSSTHPGRTIRSGATQNLSG) has biased composition (polar residues). The disordered stretch occupies residues 1 to 24 (MSSTHPGRTIRSGATQNLSGTIRP). The 3-phosphoshikimate site is built by Lys28, Ser29, and Arg33. Position 28 (Lys28) interacts with phosphoenolpyruvate. Residues Gly101 and Arg129 each coordinate phosphoenolpyruvate. 3-phosphoshikimate contacts are provided by Ser174, Gln176, Asp322, and Lys349. Gln176 lines the phosphoenolpyruvate pocket. The active-site Proton acceptor is the Asp322. Arg353 and Arg397 together coordinate phosphoenolpyruvate.

This sequence belongs to the EPSP synthase family. In terms of assembly, monomer.

Its subcellular location is the cytoplasm. It catalyses the reaction 3-phosphoshikimate + phosphoenolpyruvate = 5-O-(1-carboxyvinyl)-3-phosphoshikimate + phosphate. The protein operates within metabolic intermediate biosynthesis; chorismate biosynthesis; chorismate from D-erythrose 4-phosphate and phosphoenolpyruvate: step 6/7. Catalyzes the transfer of the enolpyruvyl moiety of phosphoenolpyruvate (PEP) to the 5-hydroxyl of shikimate-3-phosphate (S3P) to produce enolpyruvyl shikimate-3-phosphate and inorganic phosphate. The chain is 3-phosphoshikimate 1-carboxyvinyltransferase from Magnetococcus marinus (strain ATCC BAA-1437 / JCM 17883 / MC-1).